Consider the following 274-residue polypeptide: Rhamnulose-1-phosphate aldolase (274 aa).

The active site involves glutamate 117. Zn(2+)-binding residues include histidine 141, histidine 143, and histidine 212.

The protein belongs to the aldolase class II family. RhaD subfamily. Homotetramer. The cofactor is Zn(2+).

It is found in the cytoplasm. The catalysed reaction is L-rhamnulose 1-phosphate = (S)-lactaldehyde + dihydroxyacetone phosphate. Its pathway is carbohydrate degradation; L-rhamnose degradation; glycerone phosphate from L-rhamnose: step 3/3. Functionally, catalyzes the reversible cleavage of L-rhamnulose-1-phosphate to dihydroxyacetone phosphate (DHAP) and L-lactaldehyde. This Yersinia pestis protein is Rhamnulose-1-phosphate aldolase.